We begin with the raw amino-acid sequence, 292 residues long: Elongation factor Ts (292 aa).

The tract at residues T79–V82 is involved in Mg(2+) ion dislocation from EF-Tu.

It belongs to the EF-Ts family.

The protein resides in the cytoplasm. Functionally, associates with the EF-Tu.GDP complex and induces the exchange of GDP to GTP. It remains bound to the aminoacyl-tRNA.EF-Tu.GTP complex up to the GTP hydrolysis stage on the ribosome. The sequence is that of Elongation factor Ts from Mycoplasmoides gallisepticum (strain R(low / passage 15 / clone 2)) (Mycoplasma gallisepticum).